The following is a 560-amino-acid chain: MANHSRPHICQCLTRLASVKRNAVVTVYGNRKRTGREFVDGVLSLAAGLIRLGLRNGDVVSIAAFNSDLFLEWLLAVALVGGVVAPLNYRWSLKEAKMAMLLVEPVLLVTDETCVSWCIDVQNGDIPSLKWRVLMESTSTDFANELNQFLTTEMLKQRTLVPSLATYAWASDDAVVICFTSGTTGRPKGVTISHLAFITQSLAKIAIAGYGEDDVYLHTSPLVHIGGLSSAMAMLMVGACHVLLPKFDAKTALQVMEQNHITCFITVPAMMADLIRVNRTTKNGAENRGVRKILNGGGSLSSELLKEAVNIFPCARILSAYGMTEACSSLTFMTLHDPTQESFKVTYPLLNQPKQGTCVGKPAPHIELMVKLDEDSSRVGKILTRGPHTMLRYWGHQVAQENVETSESRSNEAWLDTGDIGAFDEFGNLWLIGRSNGRIKTGGENVYPEEVEAVLVEHPGIVSAVVIGVIDTRLGEMVVACVRLQEKWIWSDVENRKGSFQLSSETLKHHCRTQNLTGFKIPKRFVRWEKQFPLTTTGKVKRDEVRRQVLSHFQIMTSSL.

The transit peptide at 1–15 (MANHSRPHICQCLTR) directs the protein to the chloroplast. Helical transmembrane passes span 69–89 (LFLEWLLAVALVGGVVAPLNY), 189–209 (GVTISHLAFITQSLAKIAIAG), and 225–245 (IGGLSSAMAMLMVGACHVLLP). A Microbody targeting signal motif is present at residues 558-560 (SSL).

This sequence belongs to the ATP-dependent AMP-binding enzyme family. MenE subfamily. High expression in young leaves and flowers. Not expressed in roots.

The protein localises to the plastid. It localises to the chloroplast membrane. The protein resides in the peroxisome membrane. The catalysed reaction is 2-succinylbenzoate + ATP + CoA = 2-succinylbenzoyl-CoA + AMP + diphosphate. Its function is as follows. Involved in the biosynthesis of phylloquinone (vitamin K1). Converts 2-succinylbenzoate (OSB) to 2-succinylbenzoyl-CoA (OSB-CoA). This is 2-succinylbenzoate--CoA ligase, chloroplastic/peroxisomal (AAE14) from Arabidopsis thaliana (Mouse-ear cress).